Reading from the N-terminus, the 646-residue chain is Aquaglycerol porin AQY3 (646 aa).

Over residues 1–14 the composition is skewed to low complexity; sequence MSYESGRSSSSSES. Disordered stretches follow at residues 1–68 and 175–262; these read MSYE…SRNK and KNMD…KKRT. Over 1–350 the chain is Cytoplasmic; that stretch reads MSYESGRSSS…AKIRYHMREP (350 aa). Residues 19–41 show a composition bias toward basic and acidic residues; it reads TLKEEPNGKIAWEESVKKSRENN. The span at 190–201 shows a compositional bias: polar residues; it reads TDISRGGSTTSV. A helical transmembrane segment spans residues 351-371; sequence FAEFLGTLVLVIFGVGGNLQA. Over 372–383 the chain is Extracellular; it reads TVTKGSGGSYES. The helical transmembrane segment at 384–404 threads the bilayer; that stretch reads LSFAWGFGCMLGVYVAGGISG. Topologically, residues 405-427 are cytoplasmic; the sequence is GHINPAVTISMAIFRKFPWKKVP. Positions 408 to 410 match the NPA 1 motif; it reads NPA. Residues 428-448 form a helical membrane-spanning segment; it reads VYIVAQIIGAYFGGAMAYGYF. Residues 449–481 lie on the Extracellular side of the membrane; that stretch reads WSSITEFEGGPHIRTTATGACLFTDPKSYVTWR. A helical membrane pass occupies residues 482 to 502; the sequence is NAFFDEFIGASILVGCLMALL. Residues 503–509 are Cytoplasmic-facing; sequence DDSNAPP. A helical transmembrane segment spans residues 510-530; that stretch reads GNGMTALIIGFLVAAIGMALG. Topologically, residues 531–569 are extracellular; it reads YQTSFTINPARDLGPRIFASMIGYGPHAFHLTHWWWTWG. Positions 538-540 match the NPA 2 motif; sequence NPA. Residues 570-590 form a helical membrane-spanning segment; that stretch reads AWGGPIAGGIAGALIYDIFIF. The Cytoplasmic segment spans residues 591–646; that stretch reads TGCESPVNYPDNGYIENRVGKLLHAEFHQNDGTVSDESGVNSNSNTGSKKSVPTSS. The disordered stretch occupies residues 621-646; that stretch reads DGTVSDESGVNSNSNTGSKKSVPTSS.

It belongs to the MIP/aquaporin (TC 1.A.8) family.

The protein localises to the cell membrane. It carries out the reaction glycerol(in) = glycerol(out). Functionally, channel protein that mediates glycerol entry under ethanol stimulation. Does not seem to mediate glycerol uptake under standard conditions. In Saccharomyces cerevisiae (strain ATCC 204508 / S288c) (Baker's yeast), this protein is Aquaglycerol porin AQY3.